Consider the following 1371-residue polypeptide: DNA-directed RNA polymerase subunit beta (1371 aa).

The protein belongs to the RNA polymerase beta chain family. In terms of assembly, the RNAP catalytic core consists of 2 alpha, 1 beta, 1 beta' and 1 omega subunit. When a sigma factor is associated with the core the holoenzyme is formed, which can initiate transcription.

The enzyme catalyses RNA(n) + a ribonucleoside 5'-triphosphate = RNA(n+1) + diphosphate. Functionally, DNA-dependent RNA polymerase catalyzes the transcription of DNA into RNA using the four ribonucleoside triphosphates as substrates. This Geobacter sp. (strain M21) protein is DNA-directed RNA polymerase subunit beta.